A 99-amino-acid polypeptide reads, in one-letter code: uncharacterized protein (99 aa).

The N-terminal stretch at 1 to 17 (MMMNAFFPAMALIVLVG) is a signal peptide. Residue C18 is the site of N-palmitoyl cysteine attachment. C18 carries the S-diacylglycerol cysteine lipid modification.

It localises to the cell membrane. This is an uncharacterized protein from Escherichia coli (strain UTI89 / UPEC).